The sequence spans 602 residues: Replication protein E1 (602 aa).

A Nuclear localization signal motif is present at residues 74–76 (KRK). Phosphoserine; by host is present on residues Ser80, Ser84, and Ser95. The tract at residues 138 to 306 (QQSVSDTPVT…TNVNHQMLQE (169 aa)) is DNA-binding region. In terms of domain architecture, SF3 helicase spans 405 to 555 (VEFIPFMVKL…LPIRNGTPVY (151 aa)). Position 431 to 438 (431 to 438 (GPPNSGKS)) interacts with ATP. Lys512 participates in a covalent cross-link: Glycyl lysine isopeptide (Lys-Gly) (interchain with G-Cter in SUMO). The interval 577-602 (DPEDEGDDGGSQPALRLHTGGTSQSL) is disordered.

It belongs to the papillomaviridae E1 protein family. Can form hexamers. Interacts with E2 protein; this interaction increases E1 DNA binding specificity. Interacts with host DNA polymerase subunit POLA2. Interacts with host single stranded DNA-binding protein RPA1. Interacts with host TOP1; this interaction stimulates the enzymatic activity of TOP1. Phosphorylated. In terms of processing, sumoylated.

The protein localises to the host nucleus. The enzyme catalyses Couples ATP hydrolysis with the unwinding of duplex DNA by translocating in the 3'-5' direction.. It carries out the reaction ATP + H2O = ADP + phosphate + H(+). In terms of biological role, ATP-dependent DNA 3'-5' helicase required for initiation of viral DNA replication. It forms a complex with the viral E2 protein. The E1-E2 complex binds to the replication origin which contains binding sites for both proteins. During the initial step, a dimer of E1 interacts with a dimer of protein E2 leading to a complex that binds the viral origin of replication with high specificity. Then, a second dimer of E1 displaces the E2 dimer in an ATP-dependent manner to form the E1 tetramer. Following this, two E1 monomers are added to each half of the site, which results in the formation of two E1 trimers on the viral ori. Subsequently, two hexamers will be created. The double hexamer acts as a bi-directional helicase machinery and unwinds the viral DNA and then recruits the host DNA polymerase to start replication. In Sylvilagus floridanus (Cottontail rabbit), this protein is Replication protein E1.